The following is a 168-amino-acid chain: G/U mismatch-specific DNA glycosylase (168 aa).

The protein belongs to the uracil-DNA glycosylase (UDG) superfamily. TDG/mug family. In terms of assembly, binds DNA as a monomer.

It is found in the cytoplasm. It catalyses the reaction Specifically hydrolyzes mismatched double-stranded DNA and polynucleotides, releasing free uracil.. Functionally, excises ethenocytosine and uracil, which can arise by alkylation or deamination of cytosine, respectively, from the corresponding mispairs with guanine in ds-DNA. It is capable of hydrolyzing the carbon-nitrogen bond between the sugar-phosphate backbone of the DNA and the mispaired base. The complementary strand guanine functions in substrate recognition. Required for DNA damage lesion repair in stationary-phase cells. The chain is G/U mismatch-specific DNA glycosylase from Escherichia coli (strain SMS-3-5 / SECEC).